The sequence spans 69 residues: Protein hunchback (69 aa).

3 C2H2-type zinc fingers span residues Lys-1–His-11, Phe-17–His-39, and Tyr-45–His-69.

Belongs to the hunchback C2H2-type zinc-finger protein family.

It is found in the nucleus. Its function is as follows. Gap class segmentation protein that controls development of head structures. In Apis mellifera (Honeybee), this protein is Protein hunchback (hb).